Consider the following 258-residue polypeptide: Flagellar L-ring protein (258 aa).

The signal sequence occupies residues 1-15; it reads MKRIVCLALFLSMTG. C16 is lipidated: N-palmitoyl cysteine. C16 carries the S-diacylglycerol cysteine lipid modification.

This sequence belongs to the FlgH family. The basal body constitutes a major portion of the flagellar organelle and consists of four rings (L,P,S, and M) mounted on a central rod.

The protein resides in the cell outer membrane. It is found in the bacterial flagellum basal body. Its function is as follows. Assembles around the rod to form the L-ring and probably protects the motor/basal body from shearing forces during rotation. In Vibrio atlanticus (strain LGP32) (Vibrio splendidus (strain Mel32)), this protein is Flagellar L-ring protein.